Here is a 421-residue protein sequence, read N- to C-terminus: Cell division protein FtsZ (421 aa).

GTP contacts are provided by residues 26–30, 132–134, Glu-163, Arg-167, and Asn-211; these read GGGGN and GTG.

Belongs to the FtsZ family. In terms of assembly, homodimer. Polymerizes to form a dynamic ring structure in a strictly GTP-dependent manner. Interacts directly with several other division proteins.

The protein resides in the cytoplasm. Essential cell division protein that forms a contractile ring structure (Z ring) at the future cell division site. The regulation of the ring assembly controls the timing and the location of cell division. One of the functions of the FtsZ ring is to recruit other cell division proteins to the septum to produce a new cell wall between the dividing cells. Binds GTP and shows GTPase activity. The chain is Cell division protein FtsZ from Haemophilus influenzae (strain ATCC 51907 / DSM 11121 / KW20 / Rd).